Consider the following 370-residue polypeptide: Phosphoserine aminotransferase (370 aa).

Position 42 (Arg42) interacts with L-glutamate. Pyridoxal 5'-phosphate-binding residues include Trp108, Thr158, Asp182, and Gln205. Lys206 is modified (N6-(pyridoxal phosphate)lysine). Pyridoxal 5'-phosphate is bound at residue 247 to 248 (NT).

It belongs to the class-V pyridoxal-phosphate-dependent aminotransferase family. SerC subfamily. As to quaternary structure, homodimer. Pyridoxal 5'-phosphate is required as a cofactor.

Its subcellular location is the cytoplasm. It carries out the reaction O-phospho-L-serine + 2-oxoglutarate = 3-phosphooxypyruvate + L-glutamate. The catalysed reaction is 4-(phosphooxy)-L-threonine + 2-oxoglutarate = (R)-3-hydroxy-2-oxo-4-phosphooxybutanoate + L-glutamate. The protein operates within amino-acid biosynthesis; L-serine biosynthesis; L-serine from 3-phospho-D-glycerate: step 2/3. It functions in the pathway cofactor biosynthesis; pyridoxine 5'-phosphate biosynthesis; pyridoxine 5'-phosphate from D-erythrose 4-phosphate: step 3/5. In terms of biological role, catalyzes the reversible conversion of 3-phosphohydroxypyruvate to phosphoserine and of 3-hydroxy-2-oxo-4-phosphonooxybutanoate to phosphohydroxythreonine. The polypeptide is Phosphoserine aminotransferase (Albidiferax ferrireducens (strain ATCC BAA-621 / DSM 15236 / T118) (Rhodoferax ferrireducens)).